The following is a 211-amino-acid chain: Large ribosomal subunit protein uL4 (211 aa).

A compositionally biased stretch (polar residues) spans Gln41–Thr53. The tract at residues Gln41–Ile78 is disordered. Residues Gly60–Gly71 are compositionally biased toward basic residues.

The protein belongs to the universal ribosomal protein uL4 family. In terms of assembly, part of the 50S ribosomal subunit.

Functionally, one of the primary rRNA binding proteins, this protein initially binds near the 5'-end of the 23S rRNA. It is important during the early stages of 50S assembly. It makes multiple contacts with different domains of the 23S rRNA in the assembled 50S subunit and ribosome. Its function is as follows. Forms part of the polypeptide exit tunnel. The sequence is that of Large ribosomal subunit protein uL4 from Prochlorococcus marinus (strain MIT 9313).